Consider the following 267-residue polypeptide: Zein-alpha Z4 (267 aa).

A signal peptide spans 1-21 (MAAKIFCLIMLLGLSASAATA).

It belongs to the zein family.

Its function is as follows. Zeins are major seed storage proteins. The polypeptide is Zein-alpha Z4 (Zea mays (Maize)).